The chain runs to 240 residues: TATA-box-binding protein (240 aa).

Positions Asn-21–Ser-61 are disordered. Residues Glu-44–Thr-57 show a composition bias toward basic and acidic residues. Tandem repeats lie at residues Leu-67 to Ile-143 and Ile-157 to Leu-234.

Belongs to the TBP family. Binds DNA as monomer. The 1.2 MDa TFIID complex is composed of TATA binding protein (TBP) and the 14 TBP-associated factors. One copy of each TAF1, TAF2, TAF3, TAF7, TAF8, TAF11, TAF13, two copies of each TAF4, TAF5, TAF6, TAF9, TAF10, TAF12, and three copies of TAF14. Interacts with TFC8.

The protein resides in the nucleus. In terms of biological role, general transcription factor that functions at the core of the DNA-binding general transcription factor complex TFIID. Binding of TFIID to a promoter (with or without TATA element) is the initial step in preinitiation complex (PIC) formation. TFIID plays a key role in the regulation of gene expression by RNA polymerase II through different activities such as transcription activator interaction, core promoter recognition and selectivity, TFIIA and TFIIB interaction, chromatin modification (histone acetylation by TAF1), facilitation of DNA opening and initiation of transcription. The protein is TATA-box-binding protein (SPT15) of Saccharomyces cerevisiae (strain ATCC 204508 / S288c) (Baker's yeast).